The primary structure comprises 239 residues: 1-(5-phosphoribosyl)-5-[(5-phosphoribosylamino)methylideneamino] imidazole-4-carboxamide isomerase (239 aa).

Asp8 (proton acceptor) is an active-site residue. Residue Asp129 is the Proton donor of the active site.

This sequence belongs to the HisA/HisF family.

Its subcellular location is the cytoplasm. It carries out the reaction 1-(5-phospho-beta-D-ribosyl)-5-[(5-phospho-beta-D-ribosylamino)methylideneamino]imidazole-4-carboxamide = 5-[(5-phospho-1-deoxy-D-ribulos-1-ylimino)methylamino]-1-(5-phospho-beta-D-ribosyl)imidazole-4-carboxamide. It participates in amino-acid biosynthesis; L-histidine biosynthesis; L-histidine from 5-phospho-alpha-D-ribose 1-diphosphate: step 4/9. The polypeptide is 1-(5-phosphoribosyl)-5-[(5-phosphoribosylamino)methylideneamino] imidazole-4-carboxamide isomerase (Cereibacter sphaeroides (strain ATCC 17029 / ATH 2.4.9) (Rhodobacter sphaeroides)).